A 203-amino-acid chain; its full sequence is Ribosome maturation factor RimP (203 aa).

The span at 1-21 (MSDSEATTSTDRSESNSTATI) shows a compositional bias: polar residues. Residues 1-23 (MSDSEATTSTDRSESNSTATIHN) are disordered.

Belongs to the RimP family.

The protein localises to the cytoplasm. In terms of biological role, required for maturation of 30S ribosomal subunits. The sequence is that of Ribosome maturation factor RimP from Paenarthrobacter aurescens (strain TC1).